A 254-amino-acid chain; its full sequence is 23S rRNA (guanosine-2'-O-)-methyltransferase RlmB (254 aa).

Gly-198, Ile-218, and Leu-227 together coordinate S-adenosyl-L-methionine.

The protein belongs to the class IV-like SAM-binding methyltransferase superfamily. RNA methyltransferase TrmH family. RlmB subfamily. Homodimer.

It localises to the cytoplasm. The catalysed reaction is guanosine(2251) in 23S rRNA + S-adenosyl-L-methionine = 2'-O-methylguanosine(2251) in 23S rRNA + S-adenosyl-L-homocysteine + H(+). Functionally, specifically methylates the ribose of guanosine 2251 in 23S rRNA. The chain is 23S rRNA (guanosine-2'-O-)-methyltransferase RlmB from Blochmanniella floridana.